Reading from the N-terminus, the 294-residue chain is Porphobilinogen deaminase (294 aa).

Cys232 carries the post-translational modification S-(dipyrrolylmethanemethyl)cysteine.

The protein belongs to the HMBS family. Monomer. Dipyrromethane is required as a cofactor.

The catalysed reaction is 4 porphobilinogen + H2O = hydroxymethylbilane + 4 NH4(+). The protein operates within porphyrin-containing compound metabolism; protoporphyrin-IX biosynthesis; coproporphyrinogen-III from 5-aminolevulinate: step 2/4. Functionally, tetrapolymerization of the monopyrrole PBG into the hydroxymethylbilane pre-uroporphyrinogen in several discrete steps. In Corynebacterium diphtheriae (strain ATCC 700971 / NCTC 13129 / Biotype gravis), this protein is Porphobilinogen deaminase.